The chain runs to 179 residues: Replication restart protein DnaT (179 aa).

Over residues 151 to 168 (SRSSNGGMPQRDINSVSE) the composition is skewed to polar residues. The interval 151–179 (SRSSNGGMPQRDINSVSEPDNHIPPGFRG) is disordered.

It belongs to the DnaT family. As to quaternary structure, homooligomerizes. Interacts with PriB. Component of the replication restart primosome. Primosome assembly occurs via a 'hand-off' mechanism. PriA binds to replication forks, subsequently PriB then DnaT bind; DnaT then displaces ssDNA to generate the helicase loading substrate.

Involved in the restart of stalled replication forks, which reloads the replicative helicase on sites other than the origin of replication. Can function in multiple replication restart pathways. Displaces ssDNA from a PriB-ssDNA complex. Probably forms a spiral filament on ssDNA. The protein is Replication restart protein DnaT of Salmonella schwarzengrund (strain CVM19633).